A 63-amino-acid chain; its full sequence is Conotoxin PnMRCL-0111 (63 aa).

Residues 1–19 (MRCLPVFIVLLLLIVSAPG) form the signal peptide. A propeptide spanning residues 20 to 49 (FDARPKTEDDVPLSSFHDDLQRTVRTLLDI) is cleaved from the precursor. Trp62 bears the Tryptophan amide mark.

It belongs to the conotoxin T superfamily. In terms of processing, contains 2 disulfide bonds that can be either 'C1-C3, C2-C4' or 'C1-C4, C2-C3', since these disulfide connectivities have been observed for conotoxins with cysteine framework V (for examples, see AC P0DQQ7 and AC P81755). In terms of tissue distribution, expressed by the venom duct.

The protein resides in the secreted. This is Conotoxin PnMRCL-0111 from Conus pennaceus (Feathered cone).